The primary structure comprises 335 residues: L-threo-3-deoxy-hexylosonate aldolase (335 aa).

Residue 50–51 (SN) coordinates substrate. The active-site Schiff-base intermediate with substrate is the Lys-175.

It belongs to the DapA family.

It carries out the reaction 2-dehydro-3-deoxy-L-galactonate = L-glyceraldehyde + pyruvate. Its pathway is carbohydrate acid metabolism. Its function is as follows. Mediates the conversion of 2-dehydro-3-deoxy-L-galactonate to pyruvate and L-glyceraldehyde in D-galacturonate catabolic process. In Aspergillus niger, this protein is L-threo-3-deoxy-hexylosonate aldolase (gaaC).